We begin with the raw amino-acid sequence, 196 residues long: Putative NADH dehydrogenase/NAD(P)H nitroreductase SGR_2476 (196 aa).

Belongs to the nitroreductase family. HadB/RutE subfamily. FMN serves as cofactor.

This Streptomyces griseus subsp. griseus (strain JCM 4626 / CBS 651.72 / NBRC 13350 / KCC S-0626 / ISP 5235) protein is Putative NADH dehydrogenase/NAD(P)H nitroreductase SGR_2476.